Consider the following 721-residue polypeptide: Protein quick-to-court (721 aa).

Disordered regions lie at residues Met1–His42, Val143–Ala210, Ser360–Leu379, Asp393–Ser428, and Ser441–Gly471. A compositionally biased stretch (basic and acidic residues) spans Gln17 to His31. Residues Asn161–Pro201 show a composition bias toward low complexity. Positions Pro362–Leu379 are enriched in basic and acidic residues. The segment covering Arg406–Gln420 has biased composition (low complexity). A compositionally biased stretch (polar residues) spans Ser441–Ala454. The stretch at Lys511–Lys569 forms a coiled coil. The region spanning His668–Ala716 is the GRIP domain.

As to expression, expressed in the third antennal segment and the maxillary palp, with increased expression near the cuticle of both olfactory organs. Also detected in the second antenna segment. In the brain, expressed in the central nervous system, with high levels of expression in the visual system including the retina and optic lobe, and uniform expression in the cortex. Detected in the thorax and abdomen, with increased expression in the ventral ganglion. In males, detected in the reproductive tract including the ejaculatory bulb and testis.

Functionally, in adult males, modulates sexual behavior by playing a role in sex discrimination and maintaining normal levels of sexual activity towards both males and females. This Drosophila melanogaster (Fruit fly) protein is Protein quick-to-court.